The chain runs to 328 residues: Gonadotropin-releasing hormone receptor (328 aa).

Topologically, residues 1-38 are extracellular; it reads MANRAYLEQKQTQCSIINSSFSMTHRDLPTLTLSGKIR. Asn-18 carries N-linked (GlcNAc...) asparagine glycosylation. The chain crosses the membrane as a helical span at residues 39–58; sequence VMVTFFLFLVSTAFNASFLM. Topologically, residues 59 to 77 are cytoplasmic; sequence KLQRQTQKKEEVKKLTRMK. The helical transmembrane segment at 78–97 threads the bilayer; it reads VLLKHLTLANLLETVIVMPL. Over 98–115 the chain is Extracellular; that stretch reads DGIWNVTVQWYAGEFLCK. Asn-102 carries N-linked (GlcNAc...) asparagine glycosylation. Cys-114 and Cys-196 are disulfide-bonded. The helical transmembrane segment at 116 to 137 threads the bilayer; it reads ALSYLKLFSMYAPAFMMVVISL. At 138–164 the chain is on the cytoplasmic side; that stretch reads DRFLAITRPLAVKSNTKVGQSLIAVAW. A helical transmembrane segment spans residues 165-184; that stretch reads FLSIVLAGPQLYIFRMIYVE. Residues 185-212 lie on the Extracellular side of the membrane; sequence DISGQTGNFSQCVTHCSFPEWWQEAFYN. An N-linked (GlcNAc...) asparagine glycan is attached at Asn-192. A helical membrane pass occupies residues 213–232; sequence LLTFSCLFIGPLLIMLVCNA. Topologically, residues 233–281 are cytoplasmic; the sequence is KIIFTLTQVLHQDPHELQLNRSKNNIPRARLRTLKMTVAFATLFTICWT. Residues 282-300 traverse the membrane as a helical segment; the sequence is PYYVLGIWYWFDPEMLNRV. Residues 301 to 306 are Extracellular-facing; sequence SDPVNH. A helical membrane pass occupies residues 307-326; that stretch reads FFFLFGLLNPCFDPLIYGYF. The Cytoplasmic segment spans residues 327-328; it reads SL.

This sequence belongs to the G-protein coupled receptor 1 family.

It localises to the cell membrane. Its function is as follows. Receptor for gonadotropin releasing hormone (GnRH) that mediates the action of GnRH to stimulate the secretion of the gonadotropic hormones luteinizing hormone (LH) and follicle-stimulating hormone (FSH). This receptor mediates its action by association with G-proteins that activate a phosphatidylinositol-calcium second messenger system. In Trichosurus vulpecula (Brush-tailed possum), this protein is Gonadotropin-releasing hormone receptor (GNRHR).